The following is an 88-amino-acid chain: Large ribosomal subunit protein eL34 (88 aa).

Belongs to the eukaryotic ribosomal protein eL34 family.

The protein is Large ribosomal subunit protein eL34 of Methanobrevibacter smithii (strain ATCC 35061 / DSM 861 / OCM 144 / PS).